Reading from the N-terminus, the 591-residue chain is Paxillin (591 aa).

At methionine 1 the chain carries N-acetylmethionine. An N-acetylserine modification is found at aspartate 2. Positions 3–15 (DLDALLADLESTT) match the LD motif 1 motif. The tract at residues 17–138 (HISKRPVFLS…PSPTVMSTSL (122 aa)) is disordered. The residue at position 31 (tyrosine 31) is a Phosphotyrosine; by PTK6. Residues 45 to 54 (VPPPVPPPPS) show a composition bias toward pro residues. A compositionally biased stretch (polar residues) spans 69-106 (WQPSSSRFIHQQPQSSSPVYGSSAKTSSVSNPQDSVGS). 2 positions are modified to phosphoserine: serine 83 and serine 85. Tyrosine 88 carries the phosphotyrosine modification. Position 106 is a phosphoserine (serine 106). Tyrosine 118 is subject to Phosphotyrosine; by PTK6. A phosphoserine mark is found at serine 119, serine 126, and serine 130. Positions 121 to 137 (PNKQKSAEPSPTVMSTS) are enriched in polar residues. Phosphothreonine is present on threonine 132. A phosphoserine mark is found at serine 137, serine 140, and serine 143. Positions 144–156 (ELDRLLLELNAVQ) match the LD motif 2 motif. A disordered region spans residues 159-260 (PPGFPADEAN…TQQQTRISAS (102 aa)). Tyrosine 181 carries the phosphotyrosine modification. The short motif at 216-228 (SVESLLDELESSV) is the LD motif 3 element. Serine 230 is modified (phosphoserine). The span at 236 to 260 (TVNQGEMSSPQRVTSTQQQTRISAS) shows a compositional bias: polar residues. Residue serine 244 is modified to Phosphoserine; by CDK5. Serine 250 is subject to Phosphoserine; by SLK. Phosphoserine is present on residues serine 258, serine 261, serine 272, serine 303, serine 322, serine 332, and serine 340. The segment at 262 to 315 (ATRELDELMASLSDFKIQGLEQRADGERCWAAGWPRDGGRSSPGGQDEGGFMAQ) is required for binding to PARVA and ILK. The LD motif 4 signature appears at 265–276 (ELDELMASLSDF). The segment at 291 to 335 (WAAGWPRDGGRSSPGGQDEGGFMAQGKTGSSSPPGGPPKPGSQLD) is disordered. An LD motif 5 motif is present at residues 333–345 (QLDSMLGSLQSDL). 4 consecutive LIM zinc-binding domains span residues 356–415 (GVCG…LFSP), 416–473 (RCYY…DMFA), 474–533 (PKCG…RRGS), and 534–591 (LCSG…KLFC). Serine 533 is modified (phosphoserine).

Belongs to the paxillin family. Interacts in vitro with VCL/vinculin as well as to the SH3 domain of SRC and, when tyrosine phosphorylated, to the SH2 domain of CRK. Interacts with GIT1. Interacts with NUDT16L1/SDOS. Interacts with PTK2/FAK1. Interacts with PTK2B/PYK2. Interacts with ASAP2. Interacts with unphosphorylated ITGA4. Interacts with RNF5. Interacts with PDCD10. Interacts with NEK3, the interaction is prolactin-dependent. Interacts with PTK6. Interacts with TGFB1I1. Interacts with SORBS1. Interacts with PARVB. Interacts (via LD motif 4) with PARVA/PARVIN. Interacts (via LD motif 4) with ILK. Interacts (via cytoplasmic domain) with CEACAM1; the interaction is phosphotyrosyl-dependent. Interacts with LIMA1; this complex stabilizes actin dynamics. Interacts with CD36 (via C-terminus). Interacts with TRIM15. Interacts with PAK4; PAK4 acts as a scaffold to suppport PAXI phosphorylation at Ser-272. As to quaternary structure, interacts strongly with PTK2/FAK1 and weakly with VCL/vinculin. In terms of assembly, interacts strongly with VCL/vinculin but only weakly with PTK2/FAK1. Post-translationally, phosphorylated by MAPK1/ERK2. Phosphorylated on tyrosine residues during integrin-mediated cell adhesion, embryonic development, fibroblast transformation and following stimulation of cells by mitogens. Phosphorylation at Ser-244 by CDK5 reduces its interaction with PTK2/FAK1 in matrix-cell focal adhesions (MCFA) during oligodendrocytes (OLs) differentiation. Phosphorylation at Tyr-31 and Tyr-118 by PTK6 promote the activation of RAC1 via CRK/CrKII, thereby promoting migration and invasion. Phosphorylation at Ser-250 by SLK is required for PXN redistribution and cell motility. Phosphorylation at Ser-272 promotes focal adhesion disassembly during cell migration.

It is found in the cytoplasm. It localises to the cytoskeleton. The protein localises to the cell junction. The protein resides in the focal adhesion. Its subcellular location is the cell cortex. Cytoskeletal protein involved in actin-membrane attachment at sites of cell adhesion to the extracellular matrix (focal adhesion). Recruits other proteins such as TRIM15 to focal adhesion. The protein is Paxillin of Homo sapiens (Human).